Reading from the N-terminus, the 216-residue chain is Octanoyltransferase (216 aa).

The BPL/LPL catalytic domain occupies 24 to 212; sequence KFRKECILFL…NLCSFLEPIN (189 aa). Substrate is bound by residues 69-76, 140-142, and 153-155; these read RGGDFTAH, SIG, and GIA. The active-site Acyl-thioester intermediate is Cys171.

The protein belongs to the LipB family.

Its subcellular location is the cytoplasm. It catalyses the reaction octanoyl-[ACP] + L-lysyl-[protein] = N(6)-octanoyl-L-lysyl-[protein] + holo-[ACP] + H(+). Its pathway is protein modification; protein lipoylation via endogenous pathway; protein N(6)-(lipoyl)lysine from octanoyl-[acyl-carrier-protein]: step 1/2. Catalyzes the transfer of endogenously produced octanoic acid from octanoyl-acyl-carrier-protein onto the lipoyl domains of lipoate-dependent enzymes. Lipoyl-ACP can also act as a substrate although octanoyl-ACP is likely to be the physiological substrate. This chain is Octanoyltransferase, found in Leptospira interrogans serogroup Icterohaemorrhagiae serovar Lai (strain 56601).